Consider the following 361-residue polypeptide: Large ribosomal subunit protein mL45 (361 aa).

This sequence belongs to the mitochondrion-specific ribosomal protein mL45 family.

The protein resides in the mitochondrion. The chain is Large ribosomal subunit protein mL45 (mrpl-45) from Caenorhabditis briggsae.